The primary structure comprises 303 residues: Pseudouridine-5'-phosphate glycosidase (303 aa).

The Proton donor role is filled by Glu-23. 2 residues coordinate substrate: Lys-85 and Val-105. Asp-137 provides a ligand contact to Mn(2+). 139-141 (SQD) provides a ligand contact to substrate. Lys-158 functions as the Nucleophile in the catalytic mechanism.

This sequence belongs to the pseudouridine-5'-phosphate glycosidase family. In terms of assembly, homotrimer. Requires Mn(2+) as cofactor.

It catalyses the reaction D-ribose 5-phosphate + uracil = psi-UMP + H2O. Functionally, catalyzes the reversible cleavage of pseudouridine 5'-phosphate (PsiMP) to ribose 5-phosphate and uracil. Functions biologically in the cleavage direction, as part of a pseudouridine degradation pathway. In Myxococcus xanthus (strain DK1622), this protein is Pseudouridine-5'-phosphate glycosidase.